The chain runs to 33 residues: GFFALIPKIISSPLFKTLLSAVGSALSSSGGQE.

The protein belongs to the pardaxin family. In terms of assembly, monomer. In aqueous solution exists as a tetramer.

It is found in the secreted. Its subcellular location is the target cell membrane. Functionally, exhibits unusual shark repellent and surfactant properties. Forms voltage-dependent, ion-permeable channels in membranes. At high concentration causes cell membrane lysis. In Pardachirus marmoratus (Finless sole), this protein is Pardaxin P-4.